The sequence spans 779 residues: Endonuclease MutS2 (779 aa).

328-335 (GPNTGGKT) contacts ATP. Positions 704 to 779 (LDLRGKRYEE…GSGATIVTLG (76 aa)) constitute a Smr domain.

The protein belongs to the DNA mismatch repair MutS family. MutS2 subfamily. As to quaternary structure, homodimer. Binds to stalled ribosomes, contacting rRNA.

Endonuclease that is involved in the suppression of homologous recombination and thus may have a key role in the control of bacterial genetic diversity. Functionally, acts as a ribosome collision sensor, splitting the ribosome into its 2 subunits. Detects stalled/collided 70S ribosomes which it binds and splits by an ATP-hydrolysis driven conformational change. Acts upstream of the ribosome quality control system (RQC), a ribosome-associated complex that mediates the extraction of incompletely synthesized nascent chains from stalled ribosomes and their subsequent degradation. Probably generates substrates for RQC. The sequence is that of Endonuclease MutS2 from Streptococcus agalactiae serotype III (strain NEM316).